Here is a 438-residue protein sequence, read N- to C-terminus: Phosphoribosylamine--glycine ligase (438 aa).

The ATP-grasp domain maps to 107–319; sequence RKLFEDYDIP…LAKISKQIVD (213 aa). 134-197 contacts ATP; that stretch reads IDNFDEPVVV…EELLLGEEYT (64 aa). 3 residues coordinate Mg(2+): glutamine 277, glutamate 289, and asparagine 291. Residues glutamine 277, glutamate 289, and asparagine 291 each contribute to the Mn(2+) site.

This sequence belongs to the GARS family. Mg(2+) is required as a cofactor. The cofactor is Mn(2+).

It carries out the reaction 5-phospho-beta-D-ribosylamine + glycine + ATP = N(1)-(5-phospho-beta-D-ribosyl)glycinamide + ADP + phosphate + H(+). It participates in purine metabolism; IMP biosynthesis via de novo pathway; N(1)-(5-phospho-D-ribosyl)glycinamide from 5-phospho-alpha-D-ribose 1-diphosphate: step 2/2. The chain is Phosphoribosylamine--glycine ligase from Methanosphaera stadtmanae (strain ATCC 43021 / DSM 3091 / JCM 11832 / MCB-3).